Consider the following 732-residue polypeptide: Catalase-peroxidase (732 aa).

The tract at residues 1-26 is disordered; the sequence is MDAKTDDQGGKCPFPHGGGSRGHRNR. The segment at residues 97–219 is a cross-link (tryptophyl-tyrosyl-methioninium (Trp-Tyr) (with M-245)); that stretch reads WHSAGTYRTT…LGAVQMGLIY (123 aa). H98 serves as the catalytic Proton acceptor. The segment at residues 219-245 is a cross-link (tryptophyl-tyrosyl-methioninium (Tyr-Met) (with W-97)); the sequence is YVNPEGPNGNPDPVAAAKDIRETFARM. H260 contacts heme b.

It belongs to the peroxidase family. Peroxidase/catalase subfamily. As to quaternary structure, homodimer or homotetramer. Heme b serves as cofactor. In terms of processing, formation of the three residue Trp-Tyr-Met cross-link is important for the catalase, but not the peroxidase activity of the enzyme.

It carries out the reaction H2O2 + AH2 = A + 2 H2O. The catalysed reaction is 2 H2O2 = O2 + 2 H2O. Its function is as follows. Bifunctional enzyme with both catalase and broad-spectrum peroxidase activity. This is Catalase-peroxidase from Rhodopseudomonas palustris (strain BisB5).